Consider the following 916-residue polypeptide: Translation initiation factor IF-2 (916 aa).

Positions 50–326 are disordered; the sequence is NRDKESTSQP…NSTLQQGFNK (277 aa). Positions 109 to 241 are enriched in basic and acidic residues; it reads AQREAEEKAR…LAEENAEKWT (133 aa). A compositionally biased stretch (basic residues) spans 277 to 291; it reads GRGRAAKAPRPKKNN. The span at 292–304 shows a compositional bias: basic and acidic residues; the sequence is RHSEKADREEARA. The tr-type G domain maps to 415-584; it reads SRAPVVTIMG…LLQAEVLELK (170 aa). Positions 424–431 are G1; sequence GHVDHGKT. 424–431 is a GTP binding site; that stretch reads GHVDHGKT. Residues 449–453 are G2; it reads GITQH. The G3 stretch occupies residues 470 to 473; the sequence is DTPG. Residues 470–474 and 524–527 each bind GTP; these read DTPGH and NKID. The segment at 524–527 is G4; it reads NKID. Positions 560 to 562 are G5; it reads SAK.

This sequence belongs to the TRAFAC class translation factor GTPase superfamily. Classic translation factor GTPase family. IF-2 subfamily.

Its subcellular location is the cytoplasm. One of the essential components for the initiation of protein synthesis. Protects formylmethionyl-tRNA from spontaneous hydrolysis and promotes its binding to the 30S ribosomal subunits. Also involved in the hydrolysis of GTP during the formation of the 70S ribosomal complex. The protein is Translation initiation factor IF-2 of Proteus mirabilis (strain HI4320).